Here is a 135-residue protein sequence, read N- to C-terminus: uncharacterized protein (135 aa).

3 consecutive transmembrane segments (helical) span residues 12-32 (IPILLLVLYIALGVFIQYNGI), 68-88 (SMIGGMPGYLPLYAYLCAKFC), and 98-118 (GILYFSVVLFIMTSVIWFYLF).

It localises to the cell membrane. This is an uncharacterized protein from Methanocaldococcus jannaschii (strain ATCC 43067 / DSM 2661 / JAL-1 / JCM 10045 / NBRC 100440) (Methanococcus jannaschii).